A 433-amino-acid polypeptide reads, in one-letter code: Adenylosuccinate synthetase (433 aa).

Residues 11-17 (GDEGKGK) and 39-41 (GHT) each bind GTP. The active-site Proton acceptor is aspartate 12. Positions 12 and 39 each coordinate Mg(2+). IMP is bound by residues 12 to 15 (DEGK), 37 to 40 (NAGH), threonine 134, arginine 148, asparagine 230, threonine 245, and arginine 309. Histidine 40 functions as the Proton donor in the catalytic mechanism. 305-311 (VTTGRKR) contacts substrate. GTP is bound by residues arginine 311, 337–339 (KLD), and 419–421 (GTG).

It belongs to the adenylosuccinate synthetase family. In terms of assembly, homodimer. The cofactor is Mg(2+).

Its subcellular location is the cytoplasm. The catalysed reaction is IMP + L-aspartate + GTP = N(6)-(1,2-dicarboxyethyl)-AMP + GDP + phosphate + 2 H(+). The protein operates within purine metabolism; AMP biosynthesis via de novo pathway; AMP from IMP: step 1/2. Its function is as follows. Plays an important role in the de novo pathway and in the salvage pathway of purine nucleotide biosynthesis. Catalyzes the first committed step in the biosynthesis of AMP from IMP. The sequence is that of Adenylosuccinate synthetase from Saccharomyces cerevisiae (strain YJM789) (Baker's yeast).